Here is a 117-residue protein sequence, read N- to C-terminus: Immunoglobulin heavy variable 1-84 (117 aa).

Residues 1–19 (MGWSWIFLFLLSGTAGVHC) form the signal peptide. The framework-1 stretch occupies residues 20 to 49 (QIQLQQSGPELVKPGASVKISCKASGYTFT). Positions 31 to 117 (VKPGASVKIS…EDSAVYFCAR (87 aa)) constitute an Ig-like domain. A disulfide bond links cysteine 41 and cysteine 115. Positions 50–54 (DYYIN) are complementarity-determining-1. Residues 55–68 (WVKQRPGQGLEWIG) form a framework-2 region. Residues 69–85 (WIYPGSGNTKYNEKFKG) form a complementarity-determining-2 region. The framework-3 stretch occupies residues 86–117 (KATLTVDTSSSTAYMQLSSLTSEDSAVYFCAR).

This Mus musculus (Mouse) protein is Immunoglobulin heavy variable 1-84.